Consider the following 337-residue polypeptide: GTPase Obg (337 aa).

The Obg domain occupies 1–159 (MQFIDYVKIY…RWVILELKLL (159 aa)). Residues 160–331 (ADVGLIGLPN…LLHYLSEKVG (172 aa)) form the OBG-type G domain. GTP contacts are provided by residues 166-173 (GLPNAGKS), 191-195 (FTTLI), 213-216 (DIPG), 283-286 (TKID), and 312-314 (SAV). Mg(2+) is bound by residues Ser-173 and Thr-193.

Belongs to the TRAFAC class OBG-HflX-like GTPase superfamily. OBG GTPase family. Monomer. Requires Mg(2+) as cofactor.

It localises to the cytoplasm. In terms of biological role, an essential GTPase which binds GTP, GDP and possibly (p)ppGpp with moderate affinity, with high nucleotide exchange rates and a fairly low GTP hydrolysis rate. Plays a role in control of the cell cycle, stress response, ribosome biogenesis and in those bacteria that undergo differentiation, in morphogenesis control. This is GTPase Obg from Thermodesulfovibrio yellowstonii (strain ATCC 51303 / DSM 11347 / YP87).